The sequence spans 655 residues: Acetyl-coenzyme A synthetase (655 aa).

CoA is bound by residues 196 to 199 and T316; that span reads RGGR. ATP-binding positions include 392–394, 416–421, D508, and R523; these read GEP and DTWWQT. Position 531 (S531) interacts with CoA. R534 is an ATP binding site. Residues V545, H547, and V550 each contribute to the Mg(2+) site. N6-acetyllysine is present on K620.

The protein belongs to the ATP-dependent AMP-binding enzyme family. Mg(2+) serves as cofactor. Post-translationally, acetylated. Deacetylation by the SIR2-homolog deacetylase activates the enzyme.

It catalyses the reaction acetate + ATP + CoA = acetyl-CoA + AMP + diphosphate. Its function is as follows. Catalyzes the conversion of acetate into acetyl-CoA (AcCoA), an essential intermediate at the junction of anabolic and catabolic pathways. AcsA undergoes a two-step reaction. In the first half reaction, AcsA combines acetate with ATP to form acetyl-adenylate (AcAMP) intermediate. In the second half reaction, it can then transfer the acetyl group from AcAMP to the sulfhydryl group of CoA, forming the product AcCoA. The polypeptide is Acetyl-coenzyme A synthetase (Nitrosomonas europaea (strain ATCC 19718 / CIP 103999 / KCTC 2705 / NBRC 14298)).